The primary structure comprises 493 residues: Glutamyl-tRNA(Gln) amidotransferase subunit A (493 aa).

Residues lysine 79 and serine 159 each act as charge relay system in the active site. Serine 183 serves as the catalytic Acyl-ester intermediate.

The protein belongs to the amidase family. GatA subfamily. Heterotrimer of A, B and C subunits.

The catalysed reaction is L-glutamyl-tRNA(Gln) + L-glutamine + ATP + H2O = L-glutaminyl-tRNA(Gln) + L-glutamate + ADP + phosphate + H(+). Its function is as follows. Allows the formation of correctly charged Gln-tRNA(Gln) through the transamidation of misacylated Glu-tRNA(Gln) in organisms which lack glutaminyl-tRNA synthetase. The reaction takes place in the presence of glutamine and ATP through an activated gamma-phospho-Glu-tRNA(Gln). The chain is Glutamyl-tRNA(Gln) amidotransferase subunit A from Allorhizobium ampelinum (strain ATCC BAA-846 / DSM 112012 / S4) (Agrobacterium vitis (strain S4)).